Here is a 261-residue protein sequence, read N- to C-terminus: Phosphonates import ATP-binding protein PhnC (261 aa).

In terms of domain architecture, ABC transporter spans 8 to 253; the sequence is LRVENLSKTY…WFRRIYGEGA (246 aa). 41–48 serves as a coordination point for ATP; it reads GLSGSGKS.

The protein belongs to the ABC transporter superfamily. Phosphonates importer (TC 3.A.1.9.1) family. In terms of assembly, the complex is composed of two ATP-binding proteins (PhnC), two transmembrane proteins (PhnE) and a solute-binding protein (PhnD).

It localises to the cell inner membrane. It carries out the reaction phosphonate(out) + ATP + H2O = phosphonate(in) + ADP + phosphate + H(+). In terms of biological role, part of the ABC transporter complex PhnCDE involved in phosphonates import. Responsible for energy coupling to the transport system. The protein is Phosphonates import ATP-binding protein PhnC of Bdellovibrio bacteriovorus (strain ATCC 15356 / DSM 50701 / NCIMB 9529 / HD100).